A 217-amino-acid chain; its full sequence is Ribonuclease T (217 aa).

The 175-residue stretch at 20–194 (VVIDVETGGF…YDTDRTAELF (175 aa)) folds into the Exonuclease domain. Positions 23, 25, 181, and 186 each coordinate Mg(2+). His181 functions as the Proton donor/acceptor in the catalytic mechanism.

It belongs to the RNase T family. Homodimer. The cofactor is Mg(2+).

Its function is as follows. Trims short 3' overhangs of a variety of RNA species, leaving a one or two nucleotide 3' overhang. Responsible for the end-turnover of tRNA: specifically removes the terminal AMP residue from uncharged tRNA (tRNA-C-C-A). Also appears to be involved in tRNA biosynthesis. In Photorhabdus laumondii subsp. laumondii (strain DSM 15139 / CIP 105565 / TT01) (Photorhabdus luminescens subsp. laumondii), this protein is Ribonuclease T.